The following is a 520-amino-acid chain: Cytochrome b5 reductase 4 (520 aa).

N-acetylmethionine is present on methionine 1. Residues 1–27 form a disordered region; that stretch reads MLNVPSQAFPAPGSQQRVASQGRSKVP. Polar residues predominate over residues 13–23; sequence GSQQRVASQGR. The 77-residue stretch at 54–130 folds into the Cytochrome b5 heme-binding domain; the sequence is LIEVTEEELK…LKECLVGRMA (77 aa). Heme-binding residues include histidine 89 and histidine 112. The region spanning 164 to 255 is the CS domain; the sequence is PSSPSYDWFQ…KETVSWKCLG (92 aa). Positions 272 to 384 constitute an FAD-binding FR-type domain; it reads LYYRQCQLIS…SGPEGNFKVS (113 aa). FAD is bound by residues 364–379 and 391–423; these read DRLQ…GPEG and DLFL…KVKL.

It belongs to the flavoprotein pyridine nucleotide cytochrome reductase family. FAD serves as cofactor. In terms of tissue distribution, isoform 2 is expressed in testis, brain, skeletal muscle and in the male germline.

The protein localises to the endoplasmic reticulum. The enzyme catalyses 2 Fe(III)-[cytochrome b5] + NADH = 2 Fe(II)-[cytochrome b5] + NAD(+) + H(+). NADH-cytochrome b5 reductase involved in endoplasmic reticulum stress response pathway. Plays a critical role in protecting pancreatic beta-cells against oxidant stress, possibly by protecting the cell from excess buildup of reactive oxygen species (ROS). In Rattus norvegicus (Rat), this protein is Cytochrome b5 reductase 4 (Cyb5r4).